A 358-amino-acid chain; its full sequence is Mannonate dehydratase (358 aa).

This sequence belongs to the mannonate dehydratase family. Requires Fe(2+) as cofactor. It depends on Mn(2+) as a cofactor.

It catalyses the reaction D-mannonate = 2-dehydro-3-deoxy-D-gluconate + H2O. The protein operates within carbohydrate metabolism; pentose and glucuronate interconversion. Functionally, catalyzes the dehydration of D-mannonate. The chain is Mannonate dehydratase from Shouchella clausii (strain KSM-K16) (Alkalihalobacillus clausii).